The following is a 2388-amino-acid chain: MSNYLNANSTENNNNNNNNNNNNNNNINNNFNTTDFKIVGNFNTPPIGSNNNNNNNNNSISTQSLQTINECNSGGEQSPKIKTNNNSYNTPVSSSTSTTGTNTTPMKSTPIHNSLQNIFKNANRSNLNNNNNNNNNNNNNNNNNNNNNNNNNSGCGSGSLNSVNNNNNNNNNNNNNSNNNNSNSNSNSNNNNNSNSNNNNNNSNSNAYPLKYYQHPQQSCSNLDSFENLSPLRQSSTLLNFSSNNNNNNNNNNNNNNNNSNNNSSNNNNKNNSSKNKVGGGNNKNNGGDDSAQFISSDNKYNTVGNETHHHHHHQLHNHRHSNVQGSSSPIKSSPKLISSQSLGNIFSQISPNIALTTNISPHGSPFSSSSSSRKSSSSPSFLNQNNQNNPNNQNNQNNSTSPHEKSFLNNSNDSFDYNDNSKRLRNRLTRNTGYSSTGSIGNSSSSSFYNNNNENSNIYSKIKHTRSSSGGNKPSPKYFQTSQAIYTPPYPQPYPQPPQLPPPSSSSSLSKENDNVDNNNTNNNNNNNNNNNNNNNNNNNESFFSSKGTMNLIHISLLSVLAFYIFLMVSKKFLFRVFQWNNNINSLFILIFSFHFIFSSILMFLLVVLLKMKKYSHSISQSARESLRNSRVIPSLLNFFLSDYIFLGLVLSGLVNILQVNLFFNPKDPLLNLDSISNISTAIEFLVVGIVLNFSHIPKKMYNSRYSEFRVSSSISPYFQDESYNVNNIINNDNKNKINDKSDNSNSITNNNNINNNIDNNNNSSSNTKINNDLNFDNNIKNNDINNNITNNNNNNNNNNNNNNNTNNNNNNNNNNSNNNNNNNNNNSNKNNNTNSNNNNNNSSNNNNTNNNKINDNKNNNNNNNNNNNNNNNNNNNNNNEEDDEEEKNDWSYSFQIFFTRIFLCLSITYTLIVLRLNYDPLNQFLQQSSSFGSGANGNSGGGNVNTIISPVQFQAPLATLLHFIQLVLLLVNYNRFRTNRFFSLILSTIFIEVSSWETFGLNSRLFESYIFEALLIRRWIRACSVGFPIVGIILDIYSGWMSINQSIKSIDQQNIMIVNRFNYLCSNVKKQEELTQYNSQFYIESMNQFKRLVQNTGSIISLIYDTDVQPNQEAYLSKFSSSYEQLSKLTKECLFYSEIKQLKRNDVENLSFVVSNLLEDLISTPSIRTQFEEKEIDLFYLIDKDVPLSLVGDSQKIKQILLKLITNSIKATYEGEVYIRVSLSSNLGVLKQQPIHHHRHHHRHHHHHHHHHHHHIIDDDDYDDDNDDDNNTEDSSSCCNIDELSDKIKDNQDENLELKKSNNDKIIENKENQENNNNNNNNNNNNNNNNNNNNNNSNNNTNININTNNNNDSNNNNCINNDLKNNNNNSNNNVNNNNNNINDSNNNNNSNNNNINNNINNNINNNNNIKKKKKKNEFTVYFSVIDSGSGIDPYSTNLLFQPFSLSSYNVNSTNTDGEFGLGLAICKQLSNLMNGEIKYETEMEKGSVFELQVPMKCDSISSITSSMNSTTNTTNHYPRIMNNQSSKFFANSKWGEGLKILVIDDNPNIGKVIAMHLEPFGFKVFQRTTFQSAIYFFNERNGDFNLILLDPLIPSLVIDEIKQMKQDSSNIIKNPPLVIMCTAKLRKSLNVDNVHYLYKPIKREQLTVLSQLLPNTSTINPIYSNQNLNNSGSSNGGGGGGGGGGGGGGGGGSGSSNIDFNKTKLGGSNISTGIGNSGLINSNNIPTPVNTPSNIIPNLLSCQSLLTSLNNANIPQLTNDIGITNNNINNNSLMFTTPNSTLSNNGITGLDNNSNNDTGSIDNNSNISTNIDNNNDYFIRNNGIPPQNDMNTYNNYVLNHQQGVLPKSLSVPSTPLSYNMLPTNLNINAKRSSLQPLNENSVLPTNLTPPILSASPQSLLPMGNDINSILPNTQQSQIDLQSQIELQPLLQSTIIRNDRGGDILPDSTLEGQITNLSGNNSTISINPPLPETNNNTTTTTTTTQPKKSPILTSSNGSDKSEGSTGSNRSKSRISFLNSSNSGLLKNNLGEDIYCKGDQSEGIPIPKSERTSDSSSSSSSSDSHGQDDHSYRLEDFSISSPSSQSPLLDLSGTSGTSGTTNLANSGINSGSGSGGGDIINQNQLITSNQLFQQQLQQQQQPQQQQPPGTPTISPSSSFPLLPIPRDIINSSGASSGIKVKSSTSIPDYVQVSPRRFSGSSTGSGSSVASPQLLSTSNQLNNNINNLNLNSNNNNNNNNNNNNNNNTNNDNNNNNDNNYNVNILLVEDNLVNAKIAMTVLRKHNFRVELSKNGQLAMERIKQSHSSFDLILMDIHMPVMDGITCSKLTRKFETEHGLKHLPIIALTADATTGHKNLCLEAGCNEFMSKPLDYALLISLLKKLVFNKDQ.

8 disordered regions span residues 1-32 (MSNY…NNFN), 42-61 (FNTP…NSIS), 69-111 (NECN…STPI), 123-209 (NRSN…NAYP), 237-337 (TLLN…SPKL), 361-421 (SPHG…YNDN), 430-449 (TRNT…SSSF), and 486-542 (IYTP…NNNE). Residues 69–82 (NECNSGGEQSPKIK) show a composition bias toward polar residues. 3 stretches are compositionally biased toward low complexity: residues 83–110 (TNNN…KSTP), 125–206 (SNLN…SNSN), and 242–288 (SSNN…NNGG). The span at 293–306 (QFISSDNKYNTVGN) shows a compositional bias: polar residues. Positions 309–322 (HHHHHHQLHNHRHS) are enriched in basic residues. 4 stretches are compositionally biased toward low complexity: residues 325-337 (QGSS…SPKL), 361-399 (SPHG…NQNN), 410-419 (NNSNDSFDYN), and 432-449 (NTGY…SSSF). The segment covering 489-505 (PPYPQPYPQPPQLPPPS) has biased composition (pro residues). The span at 506–541 (SSSSLSKENDNVDNNNTNNNNNNNNNNNNNNNNNNN) shows a compositional bias: low complexity. The next 4 membrane-spanning stretches (helical) occupy residues 550 to 570 (TMNL…FLMV), 589 to 609 (FILI…LLVV), 645 to 665 (YIFL…NLFF), and 679 to 699 (NIST…SHIP). A disordered region spans residues 732–888 (NNDNKNKIND…NNNEEDDEEE (157 aa)). The span at 735-744 (NKNKINDKSD) shows a compositional bias: basic and acidic residues. The segment covering 745–880 (NSNSITNNNN…NNNNNNNNNN (136 aa)) has biased composition (low complexity). The next 3 membrane-spanning stretches (helical) occupy residues 896–916 (FQIF…LIVL), 953–973 (VQFQ…LLLV), and 1025–1045 (CSVG…WMSI). Residues 1093-1499 (RLVQNTGSII…VFELQVPMKC (407 aa)) enclose the Histidine kinase domain. Over residues 1236-1257 (PIHHHRHHHRHHHHHHHHHHHH) the composition is skewed to basic residues. The disordered stretch occupies residues 1236–1410 (PIHHHRHHHR…INNNINNNNN (175 aa)). Residues 1260–1274 (DDDDYDDDNDDDNNT) are compositionally biased toward acidic residues. Residues 1286–1315 (LSDKIKDNQDENLELKKSNNDKIIENKENQ) show a composition bias toward basic and acidic residues. Residues 1316–1410 (ENNNNNNNNN…INNNINNNNN (95 aa)) show a composition bias toward low complexity. The 116-residue stretch at 1541–1656 (KILVIDDNPN…QLTVLSQLLP (116 aa)) folds into the Response regulatory 1 domain. Aspartate 1592 carries the 4-aspartylphosphate modification. 5 disordered regions span residues 1666-1702 (SNQN…NIDF), 1960-2022 (GNNS…NSSN), 2036-2121 (CKGD…DIIN), 2133-2183 (QQQL…VKSS), and 2218-2256 (NQLN…NNND). A compositionally biased stretch (gly residues) spans 1676 to 1696 (SNGGGGGGGGGGGGGGGGGSG). A compositionally biased stretch (low complexity) spans 1974–1985 (TNNNTTTTTTTT). The span at 1986 to 2010 (QPKKSPILTSSNGSDKSEGSTGSNR) shows a compositional bias: polar residues. Residues 2054–2064 (DSSSSSSSSDS) are compositionally biased toward low complexity. Residues 2065-2076 (HGQDDHSYRLED) show a composition bias toward basic and acidic residues. Composition is skewed to low complexity over residues 2078-2109 (SISS…SGIN) and 2133-2165 (QQQL…LPIP). The span at 2169–2183 (INSSGASSGIKVKSS) shows a compositional bias: polar residues. The Response regulatory 2 domain maps to 2262–2383 (NILLVEDNLV…LLISLLKKLV (122 aa)). Aspartate 2313 bears the 4-aspartylphosphate mark.

Activation probably requires transfer of a phosphate group between a histidine in the kinase core (transmitter) domain and an aspartate of the receiver domain.

The protein localises to the membrane. It carries out the reaction ATP + protein L-histidine = ADP + protein N-phospho-L-histidine.. In terms of biological role, acts as a receptor histidine kinase for a signal transduction pathway. This protein undergoes an ATP-dependent autophosphorylation at a conserved histidine residue in the kinase core, and a phosphoryl group is then transferred to a conserved aspartate residue in the receiver domain. This Dictyostelium discoideum (Social amoeba) protein is Hybrid signal transduction histidine kinase M (dhkM).